A 175-amino-acid chain; its full sequence is RNA pyrophosphohydrolase (175 aa).

One can recognise a Nudix hydrolase domain in the interval 6-149; sequence GYRPNVGIVI…KRDVYRRVMK (144 aa). A Nudix box motif is present at residues 38 to 59; the sequence is GGINPGETPEQAMYRELFEEVG.

The protein belongs to the Nudix hydrolase family. RppH subfamily. The cofactor is a divalent metal cation.

In terms of biological role, accelerates the degradation of transcripts by removing pyrophosphate from the 5'-end of triphosphorylated RNA, leading to a more labile monophosphorylated state that can stimulate subsequent ribonuclease cleavage. The protein is RNA pyrophosphohydrolase of Yersinia enterocolitica serotype O:8 / biotype 1B (strain NCTC 13174 / 8081).